The chain runs to 443 residues: ATP-dependent protease ATPase subunit HslU (443 aa).

ATP contacts are provided by residues Ile18 and 60–65 (GVGKTE). The interval 141 to 165 (DQWGQNEENDTDSSTRQSFRKKLRE) is disordered. ATP contacts are provided by Asp256, Glu321, and Arg393.

It belongs to the ClpX chaperone family. HslU subfamily. In terms of assembly, a double ring-shaped homohexamer of HslV is capped on each side by a ring-shaped HslU homohexamer. The assembly of the HslU/HslV complex is dependent on binding of ATP.

It localises to the cytoplasm. ATPase subunit of a proteasome-like degradation complex; this subunit has chaperone activity. The binding of ATP and its subsequent hydrolysis by HslU are essential for unfolding of protein substrates subsequently hydrolyzed by HslV. HslU recognizes the N-terminal part of its protein substrates and unfolds these before they are guided to HslV for hydrolysis. The chain is ATP-dependent protease ATPase subunit HslU from Photobacterium profundum (strain SS9).